We begin with the raw amino-acid sequence, 366 residues long: Cobalt-precorrin-5B C(1)-methyltransferase (366 aa).

Belongs to the CbiD family.

It carries out the reaction Co-precorrin-5B + S-adenosyl-L-methionine = Co-precorrin-6A + S-adenosyl-L-homocysteine. The protein operates within cofactor biosynthesis; adenosylcobalamin biosynthesis; cob(II)yrinate a,c-diamide from sirohydrochlorin (anaerobic route): step 6/10. In terms of biological role, catalyzes the methylation of C-1 in cobalt-precorrin-5B to form cobalt-precorrin-6A. In Methanococcus maripaludis (strain C7 / ATCC BAA-1331), this protein is Cobalt-precorrin-5B C(1)-methyltransferase.